The sequence spans 480 residues: Glutamyl-tRNA(Gln) amidotransferase subunit A (480 aa).

Active-site charge relay system residues include Lys76 and Ser151. Ser175 acts as the Acyl-ester intermediate in catalysis.

It belongs to the amidase family. GatA subfamily. In terms of assembly, heterotrimer of A, B and C subunits.

The enzyme catalyses L-glutamyl-tRNA(Gln) + L-glutamine + ATP + H2O = L-glutaminyl-tRNA(Gln) + L-glutamate + ADP + phosphate + H(+). Functionally, allows the formation of correctly charged Gln-tRNA(Gln) through the transamidation of misacylated Glu-tRNA(Gln) in organisms which lack glutaminyl-tRNA synthetase. The reaction takes place in the presence of glutamine and ATP through an activated gamma-phospho-Glu-tRNA(Gln). The polypeptide is Glutamyl-tRNA(Gln) amidotransferase subunit A (Exiguobacterium sp. (strain ATCC BAA-1283 / AT1b)).